Here is an 82-residue protein sequence, read N- to C-terminus: Large ribosomal subunit protein bL31B-2 (82 aa).

It belongs to the bacterial ribosomal protein bL31 family. Type B subfamily. As to quaternary structure, part of the 50S ribosomal subunit.

The sequence is that of Large ribosomal subunit protein bL31B-2 from Streptomyces avermitilis (strain ATCC 31267 / DSM 46492 / JCM 5070 / NBRC 14893 / NCIMB 12804 / NRRL 8165 / MA-4680).